Reading from the N-terminus, the 84-residue chain is UPF0457 protein BALH_2270 (84 aa).

It belongs to the UPF0457 family.

This chain is UPF0457 protein BALH_2270, found in Bacillus thuringiensis (strain Al Hakam).